The sequence spans 157 residues: Protein Smg (157 aa).

This sequence belongs to the Smg family.

The sequence is that of Protein Smg from Escherichia coli O8 (strain IAI1).